The chain runs to 184 residues: Ribosome-recycling factor (184 aa).

It belongs to the RRF family.

It localises to the cytoplasm. Functionally, responsible for the release of ribosomes from messenger RNA at the termination of protein biosynthesis. May increase the efficiency of translation by recycling ribosomes from one round of translation to another. The polypeptide is Ribosome-recycling factor (Caldicellulosiruptor saccharolyticus (strain ATCC 43494 / DSM 8903 / Tp8T 6331)).